A 158-amino-acid chain; its full sequence is Putative pre-16S rRNA nuclease (158 aa).

This sequence belongs to the YqgF nuclease family.

Its subcellular location is the cytoplasm. Could be a nuclease involved in processing of the 5'-end of pre-16S rRNA. This Acidiphilium cryptum (strain JF-5) protein is Putative pre-16S rRNA nuclease.